Consider the following 200-residue polypeptide: Molybdenum cofactor guanylyltransferase (200 aa).

Residues 15–17, Lys28, Asp74, and Asp104 contribute to the GTP site; that span reads LAG. Position 104 (Asp104) interacts with Mg(2+).

Belongs to the MobA family. In terms of assembly, monomer. Mg(2+) is required as a cofactor.

It is found in the cytoplasm. It carries out the reaction Mo-molybdopterin + GTP + H(+) = Mo-molybdopterin guanine dinucleotide + diphosphate. In terms of biological role, transfers a GMP moiety from GTP to Mo-molybdopterin (Mo-MPT) cofactor (Moco or molybdenum cofactor) to form Mo-molybdopterin guanine dinucleotide (Mo-MGD) cofactor. The protein is Molybdenum cofactor guanylyltransferase of Pseudomonas fluorescens (strain Pf0-1).